Here is a 65-residue protein sequence, read N- to C-terminus: Small ribosomal subunit protein uS10 (65 aa).

This sequence belongs to the universal ribosomal protein uS10 family. Part of the 30S ribosomal subunit.

Involved in the binding of tRNA to the ribosomes. This Desulfurococcus mucosus (Desulfurococcus mobilis) protein is Small ribosomal subunit protein uS10 (rps10).